The following is a 1202-amino-acid chain: MMCEVMPTISEAEGPPGGGGGHGSGSPSQPDADSHFEQLMVSMLEERDRLLDTLRETQETLALTQGKLHEVGHERDSLQRQLNTALPQEFAALTKELNVCREQLLEREEEIAELKAERNNTRLLLEHLECLVSRHERSLRMTVVKRQAQSPAGVSSEVEVLKALKSLFEHHKALDEKVRERLRVALERCSLLEEELGATHKELMILKEQNNQKKTLTDGVLDINHEQENTPSTSGKRSSDGSLSHEEDLAKVIELQEIISKQSREQSQMKERLASLSSHVTELEEDLDTARKDLIKSEEMNTKLQRDVREAMAQKEDMEERITTLEKRYLAAQREATSVHDLNDKLENEIANKDSMHRQTEDKNRQLQERLELAEQKLQQTLRKAETLPEVEAELAQRVAALSKAEERHGNIEERLRQMEAQLEEKNQELQRARQREKMNEEHNKRLSDTVDKLLSESNERLQLHLKERMAALEDKNSLLREVESAKKQLEETQHDKDQLVLNIEALRAELDHMRLRGASLHHGRPHLGSVPDFRFPMADGHTDSYSTSAVLRRPQKGRLAALRDEPSKVQTLNEQDWERAQQASVLANVAQAFESDADVSDGEDDRDTLLSSVDLLSPSGQADAHTLAMMLQEQLDAINKEIRLIQEEKENTEQRAEEIESRVGSGSLDNLGRFRSMSSIPPYPASSLASSSPPGSGRSTPRRIPHSPAREVDRLGVMTLLPPSREEVRDDKTTIKCETSPPSSPRALRLDRLHKGALHTVSHEDIRDIRNSTGSQDGPVSNPSSSNSSQDSLHKAPKKKGIKSSIGRLFGKKEKGRPGQTGKEALGQAGVSETDNSSQDALGLSKLGGQAEKNRKLQKKHELLEEARRQGLPFAQWDGPTVVVWLELWVGMPAWYVAACRANVKSGAIMSALSDTEIQREIGISNPLHRLKLRLAIQEIMSLTSPSAPPTSRTTLAYGDMNHEWIGNEWLPSLGLPQYRSYFMECLVDARMLDHLTKKDLRGQLKMVDSFHRNSFQCGIMCLRRLNYDRKELERKREESQSEIKDVLVWSNDRVIRWILSIGLKEYANNLIESGVHGALLALDETFDFSALALLLQIPTQNTQARAVLEREFNNLLVMGTDRRFDEDDDKSFRRAPSWRKKFRPKDIRGLAAGSAETLPANFRVTSSMSSPSMQPKKMQMDGNVSGTQRLDSATVRTYSC.

The segment at 1-33 is disordered; the sequence is MMCEVMPTISEAEGPPGGGGGHGSGSPSQPDAD. The segment covering 15-24 has biased composition (gly residues); sequence PPGGGGGHGS. Residues 34–141 adopt a coiled-coil conformation; sequence SHFEQLMVSM…VSRHERSLRM (108 aa). The residue at position 150 (Ser150) is a Phosphoserine. Residues 176-214 adopt a coiled-coil conformation; sequence EKVRERLRVALERCSLLEEELGATHKELMILKEQNNQKK. Disordered stretches follow at residues 224-245 and 426-446; these read NHEQ…SLSH and KNQE…HNKR. Residue Thr230 is modified to Phosphothreonine. A phosphoserine mark is found at Ser239, Ser242, and Ser244. Coiled-coil stretches lie at residues 249–521 and 623–669; these read LAKV…GASL and ADAH…SGSL. Residue Ser448 is modified to Phosphoserine. Residues 651-662 show a composition bias toward basic and acidic residues; it reads ENTEQRAEEIES. A disordered region spans residues 651–855; it reads ENTEQRAEEI…SKLGGQAEKN (205 aa). Phosphoserine is present on residues Ser666, Ser668, and Ser693. A compositionally biased stretch (low complexity) spans 686 to 700; the sequence is ASSLASSSPPGSGRS. The segment covering 725 to 736 has biased composition (basic and acidic residues); the sequence is SREEVRDDKTTI. Thr761 carries the post-translational modification Phosphothreonine. A compositionally biased stretch (basic and acidic residues) spans 762-771; that stretch reads VSHEDIRDIR. A Phosphoserine modification is found at Ser763. The segment covering 832–841 has biased composition (polar residues); the sequence is VSETDNSSQD. The stretch at 847-871 forms a coiled coil; sequence KLGGQAEKNRKLQKKHELLEEARRQ. SAM domains follow at residues 878-944, 963-1027, and 1051-1120; these read WDGP…IMSL, NHEW…LRRL, and WSND…LLVM. Residues 1021–1050 are a coiled coil; sequence IMCLRRLNYDRKELERKREESQSEIKDVLV. Phosphoserine is present on Ser1133. Thr1159 is subject to Phosphothreonine. Residues 1163–1202 form a disordered region; it reads NFRVTSSMSSPSMQPKKMQMDGNVSGTQRLDSATVRTYSC. Residues 1168–1179 show a composition bias toward low complexity; the sequence is SSMSSPSMQPKK. The segment covering 1184–1202 has biased composition (polar residues); the sequence is GNVSGTQRLDSATVRTYSC.

This sequence belongs to the liprin family. Liprin-alpha subfamily. In terms of assembly, homodimer. Interacts with PTPRF (via D2 domain). Part of a cortical microtubule stabilization complex (CMSC) composed of KANK1, PPFIA1, PPFIBP1, ERC1/ELKS, PHLDB2/LL5beta, CLASPs, KIF21A and possibly additional interactors; within CMSCs KANK1 and PHLDB2/LL5beta seem to be the core components for recruiting microtubule-binding proteins KIF21A and CLASPs, whereas PPFIA1, PPFIBP1 and ERC1/ELKS serve as scaffolds for protein clustering. As to expression, ubiquitous.

Its subcellular location is the cytoplasm. The protein localises to the cell cortex. May regulate the disassembly of focal adhesions. May localize receptor-like tyrosine phosphatases type 2A at specific sites on the plasma membrane, possibly regulating their interaction with the extracellular environment and their association with substrates. This chain is Liprin-alpha-1 (PPFIA1), found in Homo sapiens (Human).